Reading from the N-terminus, the 195-residue chain is Small ribosomal subunit protein uS4c (195 aa).

One can recognise an S4 RNA-binding domain in the interval 82–143 (MRLDNILFRL…KQRSKALIQN (62 aa)).

It belongs to the universal ribosomal protein uS4 family. As to quaternary structure, part of the 30S ribosomal subunit. Contacts protein S5. The interaction surface between S4 and S5 is involved in control of translational fidelity.

The protein localises to the plastid. The protein resides in the chloroplast. Its function is as follows. One of the primary rRNA binding proteins, it binds directly to 16S rRNA where it nucleates assembly of the body of the 30S subunit. In terms of biological role, with S5 and S12 plays an important role in translational accuracy. In Pillansia templemannii, this protein is Small ribosomal subunit protein uS4c (rps4).